Here is a 118-residue protein sequence, read N- to C-terminus: UPF0102 protein Nwi_0116 (118 aa).

This sequence belongs to the UPF0102 family.

In Nitrobacter winogradskyi (strain ATCC 25391 / DSM 10237 / CIP 104748 / NCIMB 11846 / Nb-255), this protein is UPF0102 protein Nwi_0116.